Consider the following 296-residue polypeptide: Cell division protein DivIB (296 aa).

At 1 to 29 (MTKEIPKINNEYLKEKRKKQRIQQRRVQR) the chain is on the cytoplasmic side. Residues 30 to 50 (MIVGILVVIVLLILVYMFTPI) form a helical membrane-spanning segment. The POTRA domain occupies 51–119 (SHIKSADIKG…NPIEVNVKEH (69 aa)). Residues 51-296 (SHIKSADIKG…NKIKDEESSE (246 aa)) lie on the Extracellular side of the membrane. Residues 256-273 (NNGQTSSASAKEVQSGTA) are compositionally biased toward polar residues. Residues 256–296 (NNGQTSSASAKEVQSGTASEDKAKDDLQKALNKIKDEESSE) are disordered. Positions 274-296 (SEDKAKDDLQKALNKIKDEESSE) are enriched in basic and acidic residues.

The protein belongs to the FtsQ/DivIB family. DivIB subfamily.

The protein resides in the cell membrane. Functionally, cell division protein that may be involved in stabilizing or promoting the assembly of the division complex. In Staphylococcus pseudintermedius (strain HKU10-03), this protein is Cell division protein DivIB.